A 402-amino-acid chain; its full sequence is Serine/threonine transporter SstT (402 aa).

Helical transmembrane passes span 17-37 (IAIGVVIGAILGLLIPKITVI), 44-64 (FVGGLKAIAPLLVSALVANAL), 78-98 (IIVLYLFGTFAAALTAVISHY), 138-158 (ALSQANYIGVLLWAVVFGFAM), 179-199 (IVRWIINLAPFGILGLVFDTI), 212-232 (VLILVLVGTMTFVALVINPII), 295-315 (MAGAAVTINVLTLAAVTTLGI), and 336-356 (ASGIAGGSLLLVPVACSLFGI).

It belongs to the dicarboxylate/amino acid:cation symporter (DAACS) (TC 2.A.23) family.

It localises to the cell membrane. The catalysed reaction is L-serine(in) + Na(+)(in) = L-serine(out) + Na(+)(out). It carries out the reaction L-threonine(in) + Na(+)(in) = L-threonine(out) + Na(+)(out). Its function is as follows. Involved in the import of serine and threonine into the cell, with the concomitant import of sodium (symport system). This is Serine/threonine transporter SstT from Streptococcus thermophilus (strain CNRZ 1066).